Reading from the N-terminus, the 241-residue chain is Phosphoribosylaminoimidazole-succinocarboxamide synthase (241 aa).

This sequence belongs to the SAICAR synthetase family.

It catalyses the reaction 5-amino-1-(5-phospho-D-ribosyl)imidazole-4-carboxylate + L-aspartate + ATP = (2S)-2-[5-amino-1-(5-phospho-beta-D-ribosyl)imidazole-4-carboxamido]succinate + ADP + phosphate + 2 H(+). The protein operates within purine metabolism; IMP biosynthesis via de novo pathway; 5-amino-1-(5-phospho-D-ribosyl)imidazole-4-carboxamide from 5-amino-1-(5-phospho-D-ribosyl)imidazole-4-carboxylate: step 1/2. The polypeptide is Phosphoribosylaminoimidazole-succinocarboxamide synthase (Oenococcus oeni (strain ATCC BAA-331 / PSU-1)).